The sequence spans 471 residues: DENN domain-containing protein 2D (471 aa).

Residues 55-204 enclose the uDENN domain; sequence EYLLVVSLKK…AFPAPGKTVT (150 aa). The cDENN domain maps to 226–359; sequence HLEHVDFSSL…LQDDILDSLG (134 aa). The dDENN domain occupies 361-445; the sequence is GINELKTAEQ…QEAEKSKNPP (85 aa).

As to expression, in bronchial mucosa, mainly expressed in ciliated and basal epithelial cells and weakly in alveolar cells (at protein level). Tends to be down-regulated in lung cancers, immortalized bronchial epithelial cell lines and precancerous lesions.

It is found in the cytoplasm. In terms of biological role, guanine nucleotide exchange factor (GEF) which may activate RAB9A and RAB9B. Promotes the exchange of GDP to GTP, converting inactive GDP-bound Rab proteins into their active GTP-bound form. This Homo sapiens (Human) protein is DENN domain-containing protein 2D (DENND2D).